The following is a 199-amino-acid chain: MSSMEKHLFNLKFAAKELNRNAKKCEKEEKTEKAKIKKAIQKGNTEIARIHAENAIRQKNQGINFLRMSARVDAVAARVQTAVTMGKVTKSMAGVVKSMDATLKSMNLEKISALMDKFEHQFETLDVQTQQMEDTMSNTTTLTTPQNQVDNLLHEMADEAGLDLSMELPQGQTGSVGTSVASTEQDELSQRLARLRDQV.

Coiled-coil stretches lie at residues 8–42 and 178–199; these read LFNL…AIQK and TSVA…RDQV. A disordered region spans residues 167–199; that stretch reads ELPQGQTGSVGTSVASTEQDELSQRLARLRDQV. Positions 170-183 are enriched in polar residues; it reads QGQTGSVGTSVAST. Residues 186-196 carry the MIT-interacting motif motif; it reads DELSQRLARLR.

It belongs to the SNF7 family. Probable peripherally associated component of the endosomal sorting required for transport complex III (ESCRT-III).

It is found in the cytoplasm. The protein localises to the cytosol. It localises to the endosome. The protein resides in the late endosome membrane. Probable peripherally associated component of the endosomal sorting required for transport complex III (ESCRT-III) which is involved in multivesicular bodies (MVBs) formation and sorting of endosomal cargo proteins into MVBs. MVBs contain intraluminal vesicles (ILVs) that are generated by invagination and scission from the limiting membrane of the endosome and mostly are delivered to lysosomes enabling degradation of membrane proteins, such as stimulated growth factor receptors, lysosomal enzymes and lipids. This is Charged multivesicular body protein 1b (chmp1b) from Xenopus laevis (African clawed frog).